Here is a 673-residue protein sequence, read N- to C-terminus: ATP-dependent zinc metalloprotease FtsH (673 aa).

Topologically, residues 1-7 (MNGFFKN) are cytoplasmic. Residues 8–28 (LSLWLVIGLLMVMLFNLFNSP) traverse the membrane as a helical segment. At 29 to 100 (QGPGQSITFS…DVREPEGTPM (72 aa)) the chain is on the periplasmic side. Residues 101–121 (LMQILISWFPMLLLIAVWIYF) traverse the membrane as a helical segment. The Cytoplasmic portion of the chain corresponds to 122 to 673 (MRQMQSGGGR…DTPEGDDKDR (552 aa)). 194–201 (GPPGTGKT) provides a ligand contact to ATP. Residue His-416 coordinates Zn(2+). Residue Glu-417 is part of the active site. His-420 and Asp-492 together coordinate Zn(2+). The tract at residues 601–673 (ALKPLKKKDE…DTPEGDDKDR (73 aa)) is disordered. Polar residues predominate over residues 648 to 660 (STRTATEASTQEV). Residues 661 to 673 (VSKDTPEGDDKDR) show a composition bias toward basic and acidic residues.

It in the central section; belongs to the AAA ATPase family. This sequence in the C-terminal section; belongs to the peptidase M41 family. Homohexamer. It depends on Zn(2+) as a cofactor.

It is found in the cell inner membrane. In terms of biological role, acts as a processive, ATP-dependent zinc metallopeptidase for both cytoplasmic and membrane proteins. Plays a role in the quality control of integral membrane proteins. In Magnetococcus marinus (strain ATCC BAA-1437 / JCM 17883 / MC-1), this protein is ATP-dependent zinc metalloprotease FtsH.